A 555-amino-acid polypeptide reads, in one-letter code: La-related protein 7 (555 aa).

Positions 36-127 constitute an HTH La-type RNA-binding domain; that stretch reads RSRVKQLLSD…RRKEPLGETP (92 aa). The region spanning 133–211 is the RRM domain; sequence RTVYVELLPK…PRKPGIFPKT (79 aa). The interval 218-327 is disordered; the sequence is PFDAVTQDND…ENKDEELNSL (110 aa). Composition is skewed to polar residues over residues 238–251, 258–274, and 284–293; these read KNST…NNMD, STVT…STVS, and SQSFEASSGE. Positions 295–356 form a coiled coil; the sequence is QFEMSSKMRK…ERLKVGEEVI (62 aa). Basic and acidic residues predominate over residues 303–327; the sequence is RKVEEEKSELKDLSSENKDEELNSL. One can recognise a xRRM domain in the interval 425-538; it reads EFLSGVIVKI…TEKLISKAEK (114 aa).

The protein belongs to the LARP7 family. Core component of the 7SK RNP complex. Associates with box C/D small nucleolar ribonucleoprotein (snoRNP) complexes.

It localises to the nucleus. Its subcellular location is the nucleoplasm. Its function is as follows. RNA-binding protein that specifically binds distinct small nuclear RNA (snRNAs) and regulates their processing and function. Specifically binds the 7SK snRNA (7SK RNA) and acts as a core component of the 7SK ribonucleoprotein (RNP) complex, thereby acting as a negative regulator of transcription elongation by RNA polymerase II. The 7SK RNP complex sequesters the positive transcription elongation factor b (P-TEFb) in a large inactive 7SK RNP complex preventing RNA polymerase II phosphorylation and subsequent transcriptional elongation. The 7SK RNP complex also promotes snRNA gene transcription by RNA polymerase II via interaction with the little elongation complex (LEC). LARP7 specifically binds to the highly conserved 3'-terminal U-rich stretch of 7SK RNA; on stimulation, remains associated with 7SK RNA, whereas P-TEFb is released from the complex. LARP7 also acts as a regulator of mRNA splicing fidelity by promoting U6 snRNA processing. Specifically binds U6 snRNAs and associates with a subset of box C/D RNP complexes: promotes U6 snRNA 2'-O-methylation by facilitating U6 snRNA loading into box C/D RNP complexes. U6 snRNA 2'-O-methylation is required for mRNA splicing fidelity. The chain is La-related protein 7 from Danio rerio (Zebrafish).